We begin with the raw amino-acid sequence, 735 residues long: Translation factor GUF1 homolog, chloroplastic (735 aa).

2 disordered regions span residues 1–38 (MAVP…PSTS) and 106–126 (PENA…GVDN). A chloroplast-targeting transit peptide spans 1–47 (MAVPTIPSPACISQSANGSIISTRRSTETNPRQHPSTSYRCAGRVVR). Over residues 11–38 (CISQSANGSIISTRRSTETNPRQHPSTS) the composition is skewed to polar residues. The span at 106–115 (PENAEKDYSK) shows a compositional bias: basic and acidic residues. The tr-type G domain maps to 137–319 (SNIRNFSIIA…AVVKKIPPPK (183 aa)). GTP-binding positions include 146-153 (AHIDHGKS), 212-216 (DTPGH), and 266-269 (NKID).

It belongs to the TRAFAC class translation factor GTPase superfamily. Classic translation factor GTPase family. LepA subfamily.

Its subcellular location is the plastid. The protein resides in the chloroplast. It catalyses the reaction GTP + H2O = GDP + phosphate + H(+). Promotes chloroplast protein synthesis. May act as a fidelity factor of the translation reaction, by catalyzing a one-codon backward translocation of tRNAs on improperly translocated ribosomes. The polypeptide is Translation factor GUF1 homolog, chloroplastic (Physcomitrium patens (Spreading-leaved earth moss)).